Here is a 66-residue protein sequence, read N- to C-terminus: Toxin Os1 (66 aa).

The 65-residue stretch at 2–66 (RDGYIVQLHN…PIKWLDPKCY (65 aa)) folds into the LCN-type CS-alpha/beta domain. Cystine bridges form between cysteine 12–cysteine 65, cysteine 16–cysteine 37, cysteine 22–cysteine 47, and cysteine 26–cysteine 49.

This sequence belongs to the long (4 C-C) scorpion toxin superfamily. Sodium channel inhibitor family. Alpha subfamily. Expressed by the venom gland.

It localises to the secreted. Its function is as follows. Alpha toxins bind voltage-independently at site-3 of sodium channels (Nav) and inhibit the inactivation of the activated channels, thereby blocking neuronal transmission. This toxin possesses a high paralytic activity against mice. The sequence is that of Toxin Os1 from Orthochirus scrobiculosus (Central Asian scorpion).